Here is a 37-residue protein sequence, read N- to C-terminus: Large ribosomal subunit protein bL36A (37 aa).

Belongs to the bacterial ribosomal protein bL36 family.

This Actinobacillus pleuropneumoniae serotype 5b (strain L20) protein is Large ribosomal subunit protein bL36A.